A 239-amino-acid polypeptide reads, in one-letter code: U2 small nuclear ribonucleoprotein A' (239 aa).

LRR repeat units follow at residues 19-40 (KETELDLRWYQIPIIENLGVLR), 42-63 (VHDAIDFTDNDIRYLGNFPRMK), 64-85 (RLQTLLCGNNRITAIAPDIGKV), and 88-109 (NLKTLSLAQNHLQEIADLDPLA). Residues 122–160 (NPVAQKQYYRLYLIWRIPSLHILDFERVRRNERLRAEEV) form the LRRCT domain.

The protein belongs to the U2 small nuclear ribonucleoprotein A family. As to quaternary structure, belongs to the 40S cdc5-associated complex (or cwf complex), a spliceosome sub-complex reminiscent of a late-stage spliceosome composed of the U2, U5 and U6 snRNAs and at least brr2, cdc5, cwf2/prp3, cwf3/syf1, cwf4/syf3, cwf5/ecm2, spp42/cwf6, cwf7/spf27, cwf8, cwf9, cwf10, cwf11, cwf12, prp45/cwf13, cwf14, cwf15, cwf16, cwf17, cwf18, cwf19, cwf20, cwf21, cwf22, cwf23, cwf24, cwf25, cwf26, cyp7/cwf27, cwf28, cwf29/ist3, lea1, msl1, prp5/cwf1, prp10, prp12/sap130, prp17, prp22, sap61, sap62, sap114, sap145, slu7, smb1, smd1, smd3, smf1, smg1 and syf2.

It is found in the nucleus. Functionally, involved in pre-mRNA splicing. This protein is associated with sn-RNP U2. It helps the A' protein to bind stem loop IV of U2 snRNA. The chain is U2 small nuclear ribonucleoprotein A' (lea1) from Schizosaccharomyces pombe (strain 972 / ATCC 24843) (Fission yeast).